The primary structure comprises 217 residues: Large ribosomal subunit protein uL3 (217 aa).

The segment at 127–162 is disordered; that stretch reads GFSRGPMSHGSKNHRAPGSTGAGTTPGRIYPGKRMA. Residues 142 to 153 show a composition bias toward low complexity; the sequence is APGSTGAGTTPG.

This sequence belongs to the universal ribosomal protein uL3 family. Part of the 50S ribosomal subunit. Forms a cluster with proteins L14 and L19.

One of the primary rRNA binding proteins, it binds directly near the 3'-end of the 23S rRNA, where it nucleates assembly of the 50S subunit. The polypeptide is Large ribosomal subunit protein uL3 (Prochlorococcus marinus (strain MIT 9312)).